Consider the following 755-residue polypeptide: Polycomb protein SUZ12 (755 aa).

3 disordered regions span residues 26 to 79, 333 to 377, and 392 to 420; these read KMGN…RRIS, NANG…SRRA, and AVGRETRNNSNKRRRGGAYGEDHPPSDDR. A compositionally biased stretch (low complexity) spans 30–42; sequence KASSQAQKRSQSQ. 2 stretches are compositionally biased toward polar residues: residues 43-57 and 349-359; these read TGDSATSRPATDGSG and TQPNGTHNEGT. The segment covering 411–420 has biased composition (basic and acidic residues); it reads GEDHPPSDDR. The C2H2-type zinc finger occupies 436–458; it reads FACLICGAENERLSQLRAHYMCH. The segment at 580 to 645 is polycomb protein VEFS-Box; that stretch reads IDDSWLLLKH…KADWLVSKRS (66 aa).

Belongs to the VEFS (VRN2-EMF2-FIS2-SU(Z)12) family. As to quaternary structure, component of the polycomb repressive complex 2 (PRC2) that consists of four core subunits icluding EZH2, EED, SUZ12, and RBBP4, among which EZH2 is the catalytic subunit and which minimally requires EED and SUZ12 for catalysis.

It is found in the nucleus. Component of the of the Polycomb Repressive Complex 2 (PRC2), a histone H3 lysine methyltransferase responsible for generating mono-, di-, and tri-methylation on Lys27 (H3K27me1, H3K27me2 and H3K27me3). The tri-methylated form is known to be critical in gene repression, and its proper placement is essential in defining repression patterns during development. SUZ12 is not a catalytic subunit but is required for the complex regulation of histone H3 lysine methylation by EZH2. This chain is Polycomb protein SUZ12, found in Chaetomium thermophilum (strain DSM 1495 / CBS 144.50 / IMI 039719) (Thermochaetoides thermophila).